The sequence spans 620 residues: 1-deoxy-D-xylulose-5-phosphate synthase (620 aa).

Thiamine diphosphate is bound by residues His-80 and Gly-121–Ser-123. Asp-152 is a binding site for Mg(2+). Thiamine diphosphate contacts are provided by residues Gly-153–Ala-154, Asn-181, Tyr-288, and Glu-370. Asn-181 is a binding site for Mg(2+).

Belongs to the transketolase family. DXPS subfamily. As to quaternary structure, homodimer. Mg(2+) serves as cofactor. Requires thiamine diphosphate as cofactor.

It carries out the reaction D-glyceraldehyde 3-phosphate + pyruvate + H(+) = 1-deoxy-D-xylulose 5-phosphate + CO2. Its pathway is metabolic intermediate biosynthesis; 1-deoxy-D-xylulose 5-phosphate biosynthesis; 1-deoxy-D-xylulose 5-phosphate from D-glyceraldehyde 3-phosphate and pyruvate: step 1/1. Catalyzes the acyloin condensation reaction between C atoms 2 and 3 of pyruvate and glyceraldehyde 3-phosphate to yield 1-deoxy-D-xylulose-5-phosphate (DXP). This is 1-deoxy-D-xylulose-5-phosphate synthase from Escherichia coli O127:H6 (strain E2348/69 / EPEC).